The chain runs to 68 residues: Large ribosomal subunit protein bL35 (68 aa).

It belongs to the bacterial ribosomal protein bL35 family.

The sequence is that of Large ribosomal subunit protein bL35 from Orientia tsutsugamushi (strain Boryong) (Rickettsia tsutsugamushi).